We begin with the raw amino-acid sequence, 81 residues long: ATP synthase subunit c, chloroplastic (81 aa).

The next 2 membrane-spanning stretches (helical) occupy residues 3 to 23 (PLIS…ASIG) and 53 to 73 (LLLS…VALA).

It belongs to the ATPase C chain family. As to quaternary structure, F-type ATPases have 2 components, F(1) - the catalytic core - and F(0) - the membrane proton channel. F(1) has five subunits: alpha(3), beta(3), gamma(1), delta(1), epsilon(1). F(0) has four main subunits: a(1), b(1), b'(1) and c(10-14). The alpha and beta chains form an alternating ring which encloses part of the gamma chain. F(1) is attached to F(0) by a central stalk formed by the gamma and epsilon chains, while a peripheral stalk is formed by the delta, b and b' chains.

The protein localises to the plastid. It is found in the chloroplast thylakoid membrane. F(1)F(0) ATP synthase produces ATP from ADP in the presence of a proton or sodium gradient. F-type ATPases consist of two structural domains, F(1) containing the extramembraneous catalytic core and F(0) containing the membrane proton channel, linked together by a central stalk and a peripheral stalk. During catalysis, ATP synthesis in the catalytic domain of F(1) is coupled via a rotary mechanism of the central stalk subunits to proton translocation. Its function is as follows. Key component of the F(0) channel; it plays a direct role in translocation across the membrane. A homomeric c-ring of between 10-14 subunits forms the central stalk rotor element with the F(1) delta and epsilon subunits. The chain is ATP synthase subunit c, chloroplastic from Huperzia lucidula (Shining clubmoss).